The chain runs to 302 residues: MHIRILGSAAGGGFPQWNCNCRNCHGLRQGTLRATPRSQSSIALSDDGANWILCNASPDIRAQIEAFPALQPARAVRDTAIRALILLDSQIDHCTGLLGLREGCPHEVWCTEMVHQDLTTGFPLFAMLEHWNGGLHWKPIVLERSFAVDACPALRFTPIPLRSAAPPYSPHRHDPHPGDNLGLLVEDSRTGGTLFYAPGLGRVDAPLRERMRRADCLLVDGTLWRDDEMIHAGCGSKLGSEMGHLPQSGAGGMLEVLDGLDGRKVLIHINNTNPILDEDSPERAQLVARGIEVARDGMDIDL.

It belongs to the PqqB family.

Its pathway is cofactor biosynthesis; pyrroloquinoline quinone biosynthesis. Its function is as follows. May be involved in the transport of PQQ or its precursor to the periplasm. The sequence is that of Coenzyme PQQ synthesis protein B from Azotobacter vinelandii (strain DJ / ATCC BAA-1303).